A 453-amino-acid polypeptide reads, in one-letter code: MITLKQALSLSQDELETLKNEIDAKVRASDLNAYIKAPSLNGASAKGVPILIKDNISVKGWEITCSSKILKGYVAPYHASVMENLHQNSMAGFGLSNMDEFAMGSTTESSCYGITKNPRDKNRVPGGSSGGSAAAVAGGLAVAALGSDTGGSIRQPASYCGCVGLKPTYGRVSRYGLIAYCSSFDQIGPITQNVEDASILFDAISGHDNKDSTSANLKPTQTFKNLNKDKRFKIAILRDHIKDASSEVQLAYENTLKALKEMGHEIVEKKMLDSHYQISIYYIISMAEASSNLARFDGVRYGRRAQNIKDLKELYLKSRSEGFGDEVKRRIMLGNFVLSSGYYDAYYLKAQQMRLIIKEQYNKIFEEVDLIFTPVAPTSAHLFNYHASPLEMYLSDIYTIGANLSGLPALSLPVAKDPLGLPIGMQFIAKAFDEQSLLDISYALEQELDLKLD.

Catalysis depends on charge relay system residues K53 and S128. The active-site Acyl-ester intermediate is S152.

Belongs to the amidase family. GatA subfamily. Heterotrimer of A, B and C subunits.

The enzyme catalyses L-glutamyl-tRNA(Gln) + L-glutamine + ATP + H2O = L-glutaminyl-tRNA(Gln) + L-glutamate + ADP + phosphate + H(+). Its function is as follows. Allows the formation of correctly charged Gln-tRNA(Gln) through the transamidation of misacylated Glu-tRNA(Gln) in organisms which lack glutaminyl-tRNA synthetase. The reaction takes place in the presence of glutamine and ATP through an activated gamma-phospho-Glu-tRNA(Gln). The protein is Glutamyl-tRNA(Gln) amidotransferase subunit A of Helicobacter pylori (strain G27).